Here is a 192-residue protein sequence, read N- to C-terminus: MAEQQGRELEAECPVCWNPFNNTFHTPKMLDCCHSFCVECLAHLSLVTPARRRLLCPLCRQPTVLASGQPVTDLPTDTAMLALLRLEPHHVILEGHQLCLKDQPKSRYFLRQPQVYTLDLGPQPGGQTGPPPDTASATVSTPILIPSHHSLRECFRNPQFRIFAYLMAVILSVTLLLIFSIFWTKQFLWGVG.

Over methionine 1–arginine 161 the chain is Cytoplasmic. The segment at cysteine 13–arginine 60 adopts an RING-type zinc-finger fold. The helical; Anchor for type IV membrane protein transmembrane segment at isoleucine 162 to phenylalanine 182 threads the bilayer. Residues tryptophan 183–glycine 192 are Lumenal-facing.

Interacts with FATE1. Interacts with SEC16A. Interacts with BCL2L1. Post-translationally, autoubiquitinated (in vitro). In terms of tissue distribution, kidney and testis.

The protein resides in the endoplasmic reticulum membrane. Its subcellular location is the endoplasmic reticulum. It is found in the golgi apparatus. It localises to the cis-Golgi network membrane. The protein localises to the lysosome membrane. It carries out the reaction S-ubiquitinyl-[E2 ubiquitin-conjugating enzyme]-L-cysteine + [acceptor protein]-L-lysine = [E2 ubiquitin-conjugating enzyme]-L-cysteine + N(6)-ubiquitinyl-[acceptor protein]-L-lysine.. It participates in protein modification; protein ubiquitination. Functionally, acts as an E3 ubiquitin ligase catalyzing the covalent attachment of ubiquitin moieties onto substrate proteins. Triggers apoptosis in response to prolonged ER stress by mediating the polyubiquitination and subsequent proteasomal degradation of BCL2L1. May collaborate with FATE1 to restrain BIK protein levels thus regulating apoptotic signaling. In Homo sapiens (Human), this protein is E3 ubiquitin-protein ligase RNF183 (RNF183).